Here is a 95-residue protein sequence, read N- to C-terminus: Large ribosomal subunit protein bL25 (95 aa).

It belongs to the bacterial ribosomal protein bL25 family. As to quaternary structure, part of the 50S ribosomal subunit; part of the 5S rRNA/L5/L18/L25 subcomplex. Contacts the 5S rRNA. Binds to the 5S rRNA independently of L5 and L18.

In terms of biological role, this is one of the proteins that binds to the 5S RNA in the ribosome where it forms part of the central protuberance. This is Large ribosomal subunit protein bL25 from Haemophilus influenzae (strain 86-028NP).